Consider the following 185-residue polypeptide: Lipid A acyltransferase PagP (185 aa).

Residues 1–14 form the signal peptide; that stretch reads MKLKPVLYLLMLLG. Cys15 carries the N-palmitoyl cysteine lipid modification. Cys15 is lipidated: S-diacylglycerol cysteine. Active-site residues include His57, Asp100, and Ser101.

The protein belongs to the lipid A palmitoyltransferase family. As to quaternary structure, homodimer.

It localises to the cell outer membrane. It catalyses the reaction a lipid A + a 1,2-diacyl-sn-glycero-3-phosphocholine = a hepta-acyl lipid A + a 2-acyl-sn-glycero-3-phosphocholine. The catalysed reaction is a lipid IVA + a 1,2-diacyl-sn-glycero-3-phosphocholine = a lipid IVB + a 2-acyl-sn-glycero-3-phosphocholine. The enzyme catalyses a lipid IIA + a 1,2-diacyl-sn-glycero-3-phosphocholine = a lipid IIB + a 2-acyl-sn-glycero-3-phosphocholine. Its function is as follows. Transfers a fatty acid residue from the sn-1 position of a phospholipid to the N-linked hydroxyfatty acid chain on the proximal unit of lipid A or its precursors. This is Lipid A acyltransferase PagP from Erwinia sp. (strain Ejp617).